The following is a 233-amino-acid chain: Methylthioribulose-1-phosphate dehydratase (233 aa).

Cys-91 contacts substrate. Zn(2+) contacts are provided by His-108 and His-110. The Proton donor/acceptor role is filled by Glu-137. Position 194 (His-194) interacts with Zn(2+).

This sequence belongs to the aldolase class II family. MtnB subfamily. Zn(2+) is required as a cofactor.

It is found in the cytoplasm. It catalyses the reaction 5-(methylsulfanyl)-D-ribulose 1-phosphate = 5-methylsulfanyl-2,3-dioxopentyl phosphate + H2O. It functions in the pathway amino-acid biosynthesis; L-methionine biosynthesis via salvage pathway; L-methionine from S-methyl-5-thio-alpha-D-ribose 1-phosphate: step 2/6. Functionally, catalyzes the dehydration of methylthioribulose-1-phosphate (MTRu-1-P) into 2,3-diketo-5-methylthiopentyl-1-phosphate (DK-MTP-1-P). In Phaeosphaeria nodorum (strain SN15 / ATCC MYA-4574 / FGSC 10173) (Glume blotch fungus), this protein is Methylthioribulose-1-phosphate dehydratase.